The following is a 200-amino-acid chain: MELNFEKPLSLLTLDEIDQQEGGVIQSFRTGHTSPYPDPADWLNGEEPPPGVFITSVEKVLNWSRHYSLWPVMFGLACCAIEMMCMAASRWDLARFGMDIFRASPRQADLMIVAGTLTWKMAPWLKRIYDQMPEPKWVLAMGACGTSGGLFRDSYSVVPGFNLVVPVDVYVPGCPPRPEALMRAIMDIHEKIDKTRILKR.

Residues Cys-78, Cys-79, Cys-144, and Cys-174 each coordinate [4Fe-4S] cluster.

It belongs to the complex I 20 kDa subunit family. In terms of assembly, NDH-1 is composed of 14 different subunits. Subunits NuoB, C, D, E, F, and G constitute the peripheral sector of the complex. The cofactor is [4Fe-4S] cluster.

The protein localises to the cell membrane. The catalysed reaction is a quinone + NADH + 5 H(+)(in) = a quinol + NAD(+) + 4 H(+)(out). NDH-1 shuttles electrons from NADH, via FMN and iron-sulfur (Fe-S) centers, to quinones in the respiratory chain. The immediate electron acceptor for the enzyme in this species is believed to be ubiquinone. Couples the redox reaction to proton translocation (for every two electrons transferred, four hydrogen ions are translocated across the cytoplasmic membrane), and thus conserves the redox energy in a proton gradient. This chain is NADH-quinone oxidoreductase subunit B, found in Dehalococcoides mccartyi (strain CBDB1).